The following is a 194-amino-acid chain: Adenylate kinase (194 aa).

Glycine 11–threonine 16 contributes to the ATP binding site. An NMP region spans residues serine 31–valine 60. AMP-binding positions include threonine 32, arginine 37, histidine 58–valine 60, glycine 86–arginine 89, and glutamine 93. Residues asparagine 127–aspartate 137 form an LID region. Arginine 128 lines the ATP pocket. Residues arginine 134 and arginine 145 each contribute to the AMP site. Glycine 173 is an ATP binding site.

The protein belongs to the adenylate kinase family. As to quaternary structure, monomer.

It localises to the cytoplasm. The catalysed reaction is AMP + ATP = 2 ADP. It functions in the pathway purine metabolism; AMP biosynthesis via salvage pathway; AMP from ADP: step 1/1. Its function is as follows. Catalyzes the reversible transfer of the terminal phosphate group between ATP and AMP. Plays an important role in cellular energy homeostasis and in adenine nucleotide metabolism. This Porphyromonas gingivalis (strain ATCC BAA-308 / W83) protein is Adenylate kinase.